Consider the following 632-residue polypeptide: Extracellular metalloproteinase 2 (632 aa).

The N-terminal stretch at 1–19 (MHGLLLAGLAAALPLGVAG) is a signal peptide. A propeptide spanning residues 20–244 (LPARQQSGLS…VHNVVDYVAS (225 aa)) is cleaved from the precursor. Asparagine 270 carries N-linked (GlcNAc...) asparagine glycosylation. Histidine 429 lines the Zn(2+) pocket. Glutamate 430 is a catalytic residue. Histidine 433 provides a ligand contact to Zn(2+).

Belongs to the peptidase M36 family. Zn(2+) serves as cofactor.

It localises to the secreted. Functionally, secreted metalloproteinase probably acting as a virulence factor. The sequence is that of Extracellular metalloproteinase 2 (MEP2) from Trichophyton rubrum (Athlete's foot fungus).